A 551-amino-acid chain; its full sequence is Palatinase (551 aa).

The active-site Nucleophile is Asp-201. Residue Glu-243 is the Proton donor of the active site.

The protein belongs to the glycosyl hydrolase 13 family.

It catalyses the reaction 6-O-alpha-D-glucopyranosyl-D-fructose + H2O = alpha-D-glucose + D-fructose. It participates in glycan degradation; palatinose degradation. Functionally, catalyzes the hydrolysis of palatinose. Shows a strict specificity toward palatinose, and cannot release glucose from the disaccharides sucrose, maltose, trehalose and melibiose. Involved in the degradation of palatinose, a sucrose isomer that is formed as a reserve material under conditions of excess carbon availability, sequestered in a form unavailable to competitors such as fungi or the host plant, and whose consumption appears to be postponed until the preferentially metabolized carbon source (e.g. sucrose) is depleted. This is Palatinase from Erwinia rhapontici (Pectobacterium rhapontici).